A 930-amino-acid polypeptide reads, in one-letter code: MNKIRKFFRGSGRVLAFIFVASVIWLLFDMAALRLSFSEINTGILKEDIMRREQTGFRVEADQMTILSPSSRGMRPPRNGAGGKESFRKAENRVLKVEENVDQVQRKGKMQFLLGRGKAVSLWHRTHVQTLPVTLPMQKTQGRDSKPEVSSLHMMSKQTTVLGSEKDSFTVSRGVPLNKTAEHTETLDKKQEAPENYNLSSDTSKQASQRALNVTISVRTDRSKQQSQTVTKSSIQFASLPILKPEEVTVTKKTEAQGKDLKYEAHKARPLLKFTADVGHLKKQSTNETGLGVLPEADGAKVAPGKKLNFSESQIVIITKEEGQKTDTKEVPNSKIQTVFPKLLGESQGKHIPRSQSQTLSSPLAPKRAVSQSKPTLAEELHTARSNLTAKATTVGHQQSHANISENPGKHHVLRIDVTLSPRDLNAPGQFGRPVVVPPGKKKEAEQRWKEGNFNVYLSDLIPVDRAIEDTRPAGCAEQLVHNDLPTTSIIMCFVDEVWSALLRSVHSVLNRSPPHLIKEILLVDDFSTKDYLKANLDKYMSQFPKVRILRLKERHGLIRARLAGAQNATGDVLTFLDSHVECNVGWLEPLLERVYLNRKKVACPVIEVINDKDMSYMTVDNFQRGVFTWPMNFGWRTIPPDVIAKNGIKETDIIRCPVMAGGLFSIDKSYFYELGTYDPGLDVWGGENMELSFKVWMCGGEIEIIPCSRVGHIFRNDNPYSFPKDRMKTVERNLVRVAEVWLDEYKELFYGHGDHLIDQGLDVGNLTQQRELRKKLKCQSFKWYLDNVFPDLKAPVVRASGVFINLALGKCVSIKNITVVLEDCDGSSELQQFNYTWVRLIKHGEWCVAPIPDKGSLTLYPCDNRNNRLKWLHRSASAFHPELVDHIVFESYQQLLCMEGNFSQKTLKLAACNPTEPQQKWKFEKYYDV.

At M1–G12 the chain is on the cytoplasmic side. The helical; Signal-anchor for type II membrane protein transmembrane segment at R13–L35 threads the bilayer. The Lumenal portion of the chain corresponds to S36–V930. The segment at G163–R210 is disordered. N178 carries an N-linked (GlcNAc...) asparagine glycan. Residues T180–A193 are compositionally biased toward basic and acidic residues. Residues Y197 to R210 are compositionally biased toward polar residues. N-linked (GlcNAc...) asparagine glycosylation is found at N198 and N213. Position 285 is a phosphoserine (S285). N-linked (GlcNAc...) asparagine glycosylation is found at N287 and N309. The disordered stretch occupies residues L344–L377. 2 N-linked (GlcNAc...) asparagine glycosylation sites follow: N387 and N403. 3 disulfide bridges follow: C476/C708, C699/C779, and C812/C825. The segment at L485 to R594 is catalytic subdomain A. Residues D526 and R555 each coordinate substrate. The N-linked (GlcNAc...) asparagine glycan is linked to N568. D578 contributes to the Mn(2+) binding site. S579 contributes to the substrate binding site. Position 580 (H580) interacts with Mn(2+). Positions I654–R716 are catalytic subdomain B. Substrate is bound at residue W685. H713 provides a ligand contact to Mn(2+). 2 residues coordinate substrate: R716 and Y721. N766, N817, and N835 each carry an N-linked (GlcNAc...) asparagine glycan. The 132-residue stretch at K794–E925 folds into the Ricin B-type lectin domain. Intrachain disulfides connect C848/C863 and C898/C913. Residue N902 is glycosylated (N-linked (GlcNAc...) asparagine).

This sequence belongs to the glycosyltransferase 2 family. GalNAc-T subfamily. In terms of assembly, interacts with EXT2. Does not interact with EXT1, EXTL1 or EXTL3. The cofactor is Mn(2+). As to expression, predominantly expressed in sublingual gland. Expressed at lower level in stomach and small intestine. Weakly or not expressed in submandibular gland, parotid gland, kidney, liver, heart, brain, spleen, lung, skeletal muscle, testis, ovary, cervix and uterus.

It is found in the golgi apparatus membrane. The catalysed reaction is L-seryl-[protein] + UDP-N-acetyl-alpha-D-galactosamine = a 3-O-[N-acetyl-alpha-D-galactosaminyl]-L-seryl-[protein] + UDP + H(+). It carries out the reaction L-threonyl-[protein] + UDP-N-acetyl-alpha-D-galactosamine = a 3-O-[N-acetyl-alpha-D-galactosaminyl]-L-threonyl-[protein] + UDP + H(+). It functions in the pathway protein modification; protein glycosylation. In terms of biological role, catalyzes the initial reaction in O-linked oligosaccharide biosynthesis, the transfer of an N-acetyl-D-galactosamine residue to a serine or threonine residue on the protein receptor. Has activity toward EA2 peptide substrate, but has a weak activity toward Muc2, Muc1b, rMuc-2 or mG-Muc substrates. This Rattus norvegicus (Rat) protein is Polypeptide N-acetylgalactosaminyltransferase 5 (Galnt5).